The sequence spans 269 residues: 2' cyclic ADP-D-ribose synthase AbTIR (269 aa).

Positions 31–99 form a coiled coil; that stretch reads LKTKLSEISR…KQQKDEIEHQ (69 aa). Residues 133 to 266 form the TIR domain; that stretch reads PEYDLFISHA…EIAHQLADVI (134 aa). The NAD(+) site is built by serine 143, lysine 172, and lysine 202. The active site involves glutamate 208. Lysine 245 is a binding site for NAD(+).

Homodimer. In the presence of NAD(+) analog 8-amino-isoquinoline adenine dinucleotide (3AD) forms filaments with 3AD between monomers; conformational changes occur upon 3AD binding.

The enzyme catalyses NAD(+) = 2'cADPR + nicotinamide + H(+). The catalysed reaction is NAD(+) + H2O = ADP-D-ribose + nicotinamide + H(+). It catalyses the reaction NADP(+) + H2O = ADP-D-ribose 2'-phosphate + nicotinamide + H(+). Functionally, NAD(+) hydrolase (NADase) that catalyzes cleavage of NAD(+) into ADP-D-ribose (ADPR) and nicotinamide. In addition to ADPR, also generates a cyclization variant of cyclic ADPR (cADPR), termed 2'cADPR (v-cADPR). Cleaves NADP(+), but does not cyclize the product. This chain is 2' cyclic ADP-D-ribose synthase AbTIR, found in Acinetobacter baumannii (strain 1295743).